The primary structure comprises 632 residues: MAU2 chromatid cohesion factor homolog (632 aa).

2 TPR repeats span residues 453–486 and 493–526; these read GGFYYVQGLHAFHKNSFHEAKRFLRETLKMANAE and SCSLVLLSHVFLSIGNSKESMNMVTPAMQLASKI.

This sequence belongs to the SCC4/mau-2 family. Interacts with Nipped-B to form the cohesin loading complex.

The protein resides in the nucleus. Its subcellular location is the nucleoplasm. In terms of biological role, required for association of the cohesin complex with chromatin during interphase. Plays a role in sister chromatid cohesion and normal progression through prometaphase. The polypeptide is MAU2 chromatid cohesion factor homolog (Drosophila erecta (Fruit fly)).